The sequence spans 785 residues: Polyribonucleotide nucleotidyltransferase (785 aa).

The Mg(2+) site is built by aspartate 516 and aspartate 522. The KH domain maps to proline 582 to isoleucine 641. The region spanning glycine 653 to valine 722 is the S1 motif domain. The interval valine 722–serine 785 is disordered. The span at alanine 734–serine 764 shows a compositional bias: basic and acidic residues.

This sequence belongs to the polyribonucleotide nucleotidyltransferase family. The cofactor is Mg(2+).

The protein resides in the cytoplasm. It carries out the reaction RNA(n+1) + phosphate = RNA(n) + a ribonucleoside 5'-diphosphate. In terms of biological role, involved in mRNA degradation. Catalyzes the phosphorolysis of single-stranded polyribonucleotides processively in the 3'- to 5'-direction. The sequence is that of Polyribonucleotide nucleotidyltransferase from Salinispora tropica (strain ATCC BAA-916 / DSM 44818 / JCM 13857 / NBRC 105044 / CNB-440).